The following is a 444-amino-acid chain: Phosphoribosylamine--glycine ligase (444 aa).

Residues 109-324 (RNLFKKYEID…FLDVCFAIAE (216 aa)) enclose the ATP-grasp domain. Residue 140–202 (MTSLGKDVVV…EEKLVGVEFT (63 aa)) coordinates ATP. Gln-282, Glu-294, and Asn-296 together coordinate Mg(2+). Mn(2+) is bound by residues Gln-282, Glu-294, and Asn-296.

This sequence belongs to the GARS family. The cofactor is Mg(2+). Mn(2+) is required as a cofactor.

It carries out the reaction 5-phospho-beta-D-ribosylamine + glycine + ATP = N(1)-(5-phospho-beta-D-ribosyl)glycinamide + ADP + phosphate + H(+). The protein operates within purine metabolism; IMP biosynthesis via de novo pathway; N(1)-(5-phospho-D-ribosyl)glycinamide from 5-phospho-alpha-D-ribose 1-diphosphate: step 2/2. This is Phosphoribosylamine--glycine ligase from Methanococcus maripaludis (strain C7 / ATCC BAA-1331).